A 214-amino-acid chain; its full sequence is 3-isopropylmalate dehydratase small subunit (214 aa).

This sequence belongs to the LeuD family. LeuD type 1 subfamily. As to quaternary structure, heterodimer of LeuC and LeuD.

It carries out the reaction (2R,3S)-3-isopropylmalate = (2S)-2-isopropylmalate. Its pathway is amino-acid biosynthesis; L-leucine biosynthesis; L-leucine from 3-methyl-2-oxobutanoate: step 2/4. In terms of biological role, catalyzes the isomerization between 2-isopropylmalate and 3-isopropylmalate, via the formation of 2-isopropylmaleate. The chain is 3-isopropylmalate dehydratase small subunit from Pseudomonas putida (strain GB-1).